The following is a 293-amino-acid chain: MADVTAKMVKELRDMTGVGMMDAKKALVKVEGDMEKAVDFLRENGMAKAAKKNDRIAAEGLANVATVGNVAAIVEVNSETDFVSKNEMFQDLVKDIATKVAENKPATMEEAMAIKTEKGTIESDLIEATTVIGEKISFRRFEVVEKADNAAFGAYLHMGGRIAVLTVIDGTTDEEVAKDVAMHIAAINPRYVNESQIPQEELEHEKAVLTEQALNEGKPANIVEKMVVGRLQKFKAEIALVDQPFVKDPDMTVEKFVASKGGEVKSFVRFEVGEGIEKREDNFADEVMSQMKN.

The involved in Mg(2+) ion dislocation from EF-Tu stretch occupies residues threonine 80–valine 83.

This sequence belongs to the EF-Ts family.

It localises to the cytoplasm. In terms of biological role, associates with the EF-Tu.GDP complex and induces the exchange of GDP to GTP. It remains bound to the aminoacyl-tRNA.EF-Tu.GTP complex up to the GTP hydrolysis stage on the ribosome. This is Elongation factor Ts from Enterococcus faecalis (strain ATCC 700802 / V583).